The following is a 932-amino-acid chain: Phosphoenolpyruvate carboxylase (932 aa).

Residues histidine 164 and lysine 594 contribute to the active site.

This sequence belongs to the PEPCase type 1 family. Requires Mg(2+) as cofactor.

It catalyses the reaction oxaloacetate + phosphate = phosphoenolpyruvate + hydrogencarbonate. In terms of biological role, forms oxaloacetate, a four-carbon dicarboxylic acid source for the tricarboxylic acid cycle. This is Phosphoenolpyruvate carboxylase from Bradyrhizobium diazoefficiens (strain JCM 10833 / BCRC 13528 / IAM 13628 / NBRC 14792 / USDA 110).